A 180-amino-acid chain; its full sequence is Endoribonuclease YbeY (180 aa).

3 residues coordinate Zn(2+): H118, H122, and H128.

This sequence belongs to the endoribonuclease YbeY family. Requires Zn(2+) as cofactor.

It is found in the cytoplasm. Functionally, single strand-specific metallo-endoribonuclease involved in late-stage 70S ribosome quality control and in maturation of the 3' terminus of the 16S rRNA. This is Endoribonuclease YbeY from Rhodococcus jostii (strain RHA1).